Reading from the N-terminus, the 520-residue chain is Cytochrome P450 72A68 (520 aa).

The chain crosses the membrane as a helical span at residues 11 to 31 (IILITVTFGLVYAWRVLNWMW). Cysteine 466 serves as a coordination point for heme.

Belongs to the cytochrome P450 family. Requires heme as cofactor.

It is found in the membrane. The enzyme catalyses oleanolate + 3 reduced [NADPH--hemoprotein reductase] + 3 O2 = gypsogenate + 3 oxidized [NADPH--hemoprotein reductase] + 4 H2O + 4 H(+). Catalyzes the carboxylation of oleanolic acid at the C-23 position to form gypsogenic acid. Involved in the hemolytic saponin biosynthetic pathway. This Medicago truncatula (Barrel medic) protein is Cytochrome P450 72A68.